The following is a 45-amino-acid chain: uncharacterized protein (45 aa).

The C2H2-type zinc-finger motif lies at Tyr2 to His25.

This is an uncharacterized protein from Sulfolobus spindle-shape virus 1 (SSV1).